Consider the following 169-residue polypeptide: Centrosomal protein 20 (169 aa).

The interval methionine 1–valine 104 is necessary and sufficient for homooligomerization and localization to centrosomes and pericentriolar satellites. One can recognise a LisH domain in the interval glutamate 49–glutamate 81. Residues threonine 135–arginine 169 are disordered. The span at glycine 151–threonine 160 shows a compositional bias: polar residues.

This sequence belongs to the CEP43 family. As to quaternary structure, homooligomer; probably required for localization to centrosomes.

It localises to the cell projection. The protein localises to the cilium. Its subcellular location is the cytoplasm. The protein resides in the cytoskeleton. It is found in the cilium basal body. It localises to the microtubule organizing center. The protein localises to the centrosome. Its subcellular location is the cytoplasmic granule. The protein resides in the centriolar satellite. Its function is as follows. Involved in the biogenesis of cilia. Required for the recruitment of PLK1 to centrosomes and S phase progression. The polypeptide is Centrosomal protein 20 (Cep20) (Xenopus laevis (African clawed frog)).